The chain runs to 906 residues: Catenin alpha-1 (906 aa).

Thr-2 is modified (N-acetylthreonine). The tract at residues 2–228 is involved in homodimerization; the sequence is TAVHAGNINF…PILYTASQAC (227 aa). Lys-57 is covalently cross-linked (Glycyl lysine isopeptide (Lys-Gly) (interchain with G-Cter in SUMO2)). The tract at residues 97 to 148 is interaction with JUP and CTNNB1; the sequence is VRKQGDLMKAAAGEFADDPCSSVKRGNMVRAARALLSAVTRLLILADMADVY. 4 positions are modified to phosphoserine: Ser-264, Ser-268, Ser-295, and Ser-297. Residues 325–394 are interaction with alpha-actinin; the sequence is TRDDRRERIV…AVMDHVSDSF (70 aa). Residue Thr-634 is modified to Phosphothreonine. Phosphoserine; by CK2 is present on Ser-641. At Thr-645 the chain carries Phosphothreonine. Phosphoserine; by CK1 is present on residues Ser-652 and Ser-655. Phosphothreonine; by CK1 is present on Thr-658. A Glycyl lysine isopeptide (Lys-Gly) (interchain with G-Cter in SUMO2) cross-link involves residue Lys-797. Position 851 is a phosphoserine (Ser-851). Over residues 864–880 the composition is skewed to basic and acidic residues; it reads PEKKPLVKREKQDETQT. The interval 864-894 is disordered; it reads PEKKPLVKREKQDETQTKIKRASQKKHVNPV. Residues 881-891 show a composition bias toward basic residues; the sequence is KIKRASQKKHV.

Belongs to the vinculin/alpha-catenin family. As to quaternary structure, monomer and homodimer; the monomer preferentially binds to CTNNB1 and the homodimer to actin. Component of an cadherin:catenin adhesion complex composed of at least of CDH26, beta-catenin/CTNNB1, alpha-catenin/CTNNA1 and p120 catenin/CTNND1. Possible component of an E-cadherin/ catenin adhesion complex together with E-cadherin/CDH1 and beta-catenin/CTNNB1 or gamma-catenin/JUP; the complex is located to adherens junctions. The stable association of CTNNA1 is controversial as CTNNA1 was shown not to bind to F-actin when assembled in the complex. Alternatively, the CTNNA1-containing complex may be linked to F-actin by other proteins such as LIMA1. Binds AFDN and F-actin. Interacts with ARHGAP21. Interacts with AJUBA. Interacts with LIMA1. Interacts with vinculin/VCL. Interacts with TJP2/ZO2 (via N-terminus). Interacts with TJP1/ZO1 (via N-terminus). Sumoylated. Post-translationally, phosphorylation seems to contribute to the strength of cell-cell adhesion rather than to the basic capacity for cell-cell adhesion. As to expression, ubiquitously expressed in normal tissues. In terms of tissue distribution, abundantly expressed in brain and cerebellum, also expressed in the placenta, liver, lung, colon, heart, pancreas, stomach and thymus.

Its subcellular location is the cytoplasm. It is found in the cytoskeleton. The protein localises to the cell junction. The protein resides in the adherens junction. It localises to the cell membrane. Its subcellular location is the nucleus. In terms of biological role, associates with the cytoplasmic domain of a variety of cadherins. The association of catenins to cadherins produces a complex which is linked to the actin filament network, and which seems to be of primary importance for cadherins cell-adhesion properties. Can associate with both E- and N-cadherins. Originally believed to be a stable component of E-cadherin/catenin adhesion complexes and to mediate the linkage of cadherins to the actin cytoskeleton at adherens junctions. In contrast, cortical actin was found to be much more dynamic than E-cadherin/catenin complexes and CTNNA1 was shown not to bind to F-actin when assembled in the complex suggesting a different linkage between actin and adherens junctions components. The homodimeric form may regulate actin filament assembly and inhibit actin branching by competing with the Arp2/3 complex for binding to actin filaments. Involved in the regulation of WWTR1/TAZ, YAP1 and TGFB1-dependent SMAD2 and SMAD3 nuclear accumulation. May play a crucial role in cell differentiation. The chain is Catenin alpha-1 from Homo sapiens (Human).